The primary structure comprises 628 residues: TLHDKQIRVCHLFEQLSSATVIGDGDKHKHSDRLKNVGKLQPGAIFSCFHPDHLEEARHLYEVFWEAGDFNDFIEIAKEARTFVNEGLFAFAAEVAVLHRDDCKGLYVPPVQEIFPDKFIPSAAINEAFKKAHVRPEFDESPILVDVQDTGNILDPEYRLAYYREDVGINAHHWHWHLVYPSTWNPKYFGKKKDRKGELFYYMHQQMCARYDCERLSNGMHRMLPFNNFDEPLAGYAPHLTHVASGKYYSPRPDGLKLRDLGDIEISEMVRMRERILDSIHLGYVISEDGSHKTLDELHGTDILGALVESSYESVNHEYYGNLHNWGHVTMARIHDPDGRFHEEPGVMSDTSTSLRDPIFYNWHRFIDNIFHEYKNTLKPYDHDVLNFPDIQVQDVTLHARVDNVVHFTMREQELELKHGINPGNARSIKARYYHLDHEPFSYAVNVQNNSASDKHATVRIFLAPKYDELGNEIKADELRRTAIELDKFKTDLHPGKNTVVRHSLDSSVTLSHQPTFEDLLHGVGLNEHKSEYCSCGWPSHLLVPKGNIKGMEYHLFVMLTDWDKDKVDGSESVACVDAVSYCGARDHKYPDKKPMGFPFDRPIHTEHISDFLTNNMFIKDIKIKFHE.

At Thr1 the chain carries Blocked amino end (Thr); partial. Residues His173, His177, His204, His324, His328, and His364 each contribute to the Cu cation site. A glycan (N-linked (GlcNAc...) asparagine) is linked at Asn449. Cystine bridges form between Cys534-Cys576 and Cys536-Cys583.

The protein belongs to the tyrosinase family. Hemocyanin subfamily. In terms of assembly, hexamer or a multiple thereof. In terms of tissue distribution, hemolymph.

The protein localises to the secreted. It localises to the extracellular space. Hemocyanins are copper-containing oxygen carriers occurring freely dissolved in the hemolymph of many mollusks and arthropods. In Limulus polyphemus (Atlantic horseshoe crab), this protein is Hemocyanin II.